The following is a 261-amino-acid chain: uncharacterized protein (261 aa).

The tract at residues 1–22 is disordered; sequence MAETTEPPSDAGTSQADAMALA. Residues 107-127 form a helical membrane-spanning segment; sequence IAMAAAVVIICGFTGLSGYIV.

This sequence to M.tuberculosis Rv1362c.

It is found in the membrane. This is an uncharacterized protein from Mycobacterium tuberculosis (strain ATCC 25618 / H37Rv).